The chain runs to 506 residues: Cobyric acid synthase (506 aa).

The GATase cobBQ-type domain maps to 251-448; the sequence is DITIAIVQLP…LHGLFDSDAF (198 aa). The active-site Nucleophile is Cys332. His440 is a catalytic residue.

It belongs to the CobB/CobQ family. CobQ subfamily.

It functions in the pathway cofactor biosynthesis; adenosylcobalamin biosynthesis. In terms of biological role, catalyzes amidations at positions B, D, E, and G on adenosylcobyrinic A,C-diamide. NH(2) groups are provided by glutamine, and one molecule of ATP is hydrogenolyzed for each amidation. This Salmonella dublin (strain CT_02021853) protein is Cobyric acid synthase.